The following is a 225-amino-acid chain: Transmembrane protein C16orf54 homolog (225 aa).

Residues Pro-32–Ala-52 traverse the membrane as a helical segment. Disordered regions lie at residues Asp-106–His-163 and Glu-178–Trp-200. A phosphothreonine mark is found at Thr-113 and Thr-117. Positions Ala-122–Pro-140 are enriched in low complexity. Phosphoserine is present on Ser-195.

It localises to the membrane. The polypeptide is Transmembrane protein C16orf54 homolog (Mus musculus (Mouse)).